The primary structure comprises 563 residues: Forkhead box protein O (563 aa).

2 disordered regions span residues 1–72 and 177–243; these read MDDF…DPQQ and KSVR…SYQL. Residue Thr43 is modified to Phosphothreonine; by PKB/AKT1. Over residues 58–72 the composition is skewed to polar residues; sequence TKASNQQLANGDPQQ. Residues 90–196 constitute a DNA-binding region (fork-head); it reads WGNLSYADLI…ETSRYEKRRG (107 aa). Phosphoserine; by PKB/AKT1 is present on Ser185. Residues 216–225 are compositionally biased toward polar residues; the sequence is ATPSPSSSVS. Phosphoserine; by PKB/AKT1 is present on Ser253. 3 positions are modified to phosphoserine: Ser256, Ser257, and Ser262. Residues 317–371 are disordered; that stretch reads AASGLPTQPPPPYQPPQHPQHTQGYALNGPGLSPNSVTTTMSPAYPNSEPSSDSL. A compositionally biased stretch (pro residues) spans 323–334; the sequence is TQPPPPYQPPQH. The segment covering 349-358 has biased composition (polar residues); it reads SPNSVTTTMS.

Interacts with melt.

Its subcellular location is the cytoplasm. The protein localises to the nucleus. Functionally, transcription factor involved in the regulation of the insulin signaling pathway. Consistently activates both the downstream target Thor\d4EBP and the feedback control target InR. Involved in negative regulation of the cell cycle, modulating cell growth and proliferation. In response to cellular stresses, such as nutrient deprivation or increased levels of reactive oxygen species, foxo is activated and inhibits growth through the action of target genes such as Thor. Foxo activated in the adult fat body can regulate lifespan in adults; an insulin peptide itself may function as one secondary messenger of insulin-regulated aging. Also regulates Lip4, homolog of human acid lipases, thereby acting as a key modulator of lipid metabolism by insulin signaling and integrates insulin responses to glucose and lipid homeostasis. The chain is Forkhead box protein O from Drosophila mojavensis (Fruit fly).